Here is a 494-residue protein sequence, read N- to C-terminus: Uric acid degradation bifunctional protein PucL (494 aa).

Residues 1 to 174 (MFTMDDLNQM…EKGETQMKRT (174 aa)) are OHCU decarboxylase. Histidine 68 serves as the catalytic Proton donor; for OHCU decarboxylase activity. Residues proline 69, 81-85 (SVREQ), and 116-120 (FILAV) each bind 5-hydroxy-2-oxo-4-ureido-2,5-dihydro-1H-imidazole-5-carboxylate. The interval 175 to 494 (MSYGKGNVFA…AAEKCRSLKA (320 aa)) is urate oxidase. Lysine 179 serves as the catalytic Charge relay system; for urate oxidase activity. The Charge relay system role is filled by lysine 190. Threonine 239 serves as the catalytic Charge relay system; for urate oxidase activity. Residues threonine 239, aspartate 240, phenylalanine 349, arginine 366, isoleucine 414, glutamine 415, and asparagine 441 each coordinate urate.

The protein in the N-terminal section; belongs to the OHCU decarboxylase family. This sequence in the C-terminal section; belongs to the uricase family.

It catalyses the reaction 5-hydroxy-2-oxo-4-ureido-2,5-dihydro-1H-imidazole-5-carboxylate + H(+) = (S)-allantoin + CO2. The enzyme catalyses urate + O2 + H2O = 5-hydroxyisourate + H2O2. Its pathway is purine metabolism; urate degradation; (S)-allantoin from urate: step 1/3. It participates in purine metabolism; urate degradation; (S)-allantoin from urate: step 3/3. Functionally, catalyzes two steps in the degradation of uric acid, i.e. the oxidation of uric acid to 5-hydroxyisourate (HIU) and the stereoselective decarboxylation of 2-oxo-4-hydroxy-4-carboxy-5-ureidoimidazoline (OHCU) to (S)-allantoin. The protein is Uric acid degradation bifunctional protein PucL (pucL) of Bacillus subtilis (strain 168).